A 158-amino-acid polypeptide reads, in one-letter code: Large ribosomal subunit protein uL18 (158 aa).

Belongs to the universal ribosomal protein uL18 family. As to quaternary structure, part of the 50S ribosomal subunit. Contacts the 5S and 23S rRNAs.

Functionally, this is one of the proteins that bind and probably mediate the attachment of the 5S RNA into the large ribosomal subunit, where it forms part of the central protuberance. The chain is Large ribosomal subunit protein uL18 from Picrophilus torridus (strain ATCC 700027 / DSM 9790 / JCM 10055 / NBRC 100828 / KAW 2/3).